The chain runs to 95 residues: Aspartyl/glutamyl-tRNA(Asn/Gln) amidotransferase subunit C (95 aa).

Belongs to the GatC family. Heterotrimer of A, B and C subunits.

The enzyme catalyses L-glutamyl-tRNA(Gln) + L-glutamine + ATP + H2O = L-glutaminyl-tRNA(Gln) + L-glutamate + ADP + phosphate + H(+). It catalyses the reaction L-aspartyl-tRNA(Asn) + L-glutamine + ATP + H2O = L-asparaginyl-tRNA(Asn) + L-glutamate + ADP + phosphate + 2 H(+). Allows the formation of correctly charged Asn-tRNA(Asn) or Gln-tRNA(Gln) through the transamidation of misacylated Asp-tRNA(Asn) or Glu-tRNA(Gln) in organisms which lack either or both of asparaginyl-tRNA or glutaminyl-tRNA synthetases. The reaction takes place in the presence of glutamine and ATP through an activated phospho-Asp-tRNA(Asn) or phospho-Glu-tRNA(Gln). This chain is Aspartyl/glutamyl-tRNA(Asn/Gln) amidotransferase subunit C, found in Methylocella silvestris (strain DSM 15510 / CIP 108128 / LMG 27833 / NCIMB 13906 / BL2).